The sequence spans 253 residues: Imidazole glycerol phosphate synthase subunit HisF (253 aa).

Residues D11 and D130 contribute to the active site.

Belongs to the HisA/HisF family. Heterodimer of HisH and HisF.

The protein resides in the cytoplasm. It catalyses the reaction 5-[(5-phospho-1-deoxy-D-ribulos-1-ylimino)methylamino]-1-(5-phospho-beta-D-ribosyl)imidazole-4-carboxamide + L-glutamine = D-erythro-1-(imidazol-4-yl)glycerol 3-phosphate + 5-amino-1-(5-phospho-beta-D-ribosyl)imidazole-4-carboxamide + L-glutamate + H(+). Its pathway is amino-acid biosynthesis; L-histidine biosynthesis; L-histidine from 5-phospho-alpha-D-ribose 1-diphosphate: step 5/9. IGPS catalyzes the conversion of PRFAR and glutamine to IGP, AICAR and glutamate. The HisF subunit catalyzes the cyclization activity that produces IGP and AICAR from PRFAR using the ammonia provided by the HisH subunit. The sequence is that of Imidazole glycerol phosphate synthase subunit HisF from Clostridium beijerinckii (strain ATCC 51743 / NCIMB 8052) (Clostridium acetobutylicum).